Consider the following 71-residue polypeptide: Small ribosomal subunit protein bS21 (71 aa).

Residues 39-71 are disordered; it reads EKPTQERKRKAAAAVKRQMRRTSRDVTKRKRLY. Over residues 45-71 the composition is skewed to basic residues; it reads RKRKAAAAVKRQMRRTSRDVTKRKRLY.

Belongs to the bacterial ribosomal protein bS21 family.

The protein is Small ribosomal subunit protein bS21 of Xylella fastidiosa (strain M12).